A 990-amino-acid chain; its full sequence is Nucleotide-binding leucine-rich repeat (NLR)-like protein (990 aa).

Residues 22–304 (GWICAIPTEL…AVAAAYAKIL (283 aa)) are purine nucleoside phosphorylase domain. The NB-ARC domain occupies 334-563 (REEHLRQVLT…TISNYLEVYE (230 aa)). 6 TPR repeats span residues 732-765 (RDLLHNIGEYYYRTGKYREAEEFYWRALELKKLA), 774-807 (IGSMNNLAVVYERHGEYAKAESLQRQTLELMKQV), 816-849 (LGSMNNLALVYEQQGEYAEAEKLQQQTLELRKQA), 858-891 (LMSMNNLATIYEQQGEYAKAESLQRQTLELKQQT), 900-933 (LASMNNLALVYEHQGEYAKAETLYQQTLKLRKQV), and 942-975 (LQSMNNLAIVYRLQGKYIEAEGLQQQQQSQATLD). Residues 965 to 990 (QQQQQSQATLDEGRLSKPARKRRKKK) are disordered. A compositionally biased stretch (basic residues) spans 981-990 (KPARKRRKKK).

The catalysed reaction is ATP + H2O = D-ribose 5-triphosphate + adenine. It carries out the reaction dATP + H2O = 2-deoxyribose 5-triphosphate + adenine. In terms of biological role, the N-terminal purine nucleoside phosphorylase (PNP) domain cleaves the N-glycosidic bond of ATP, and to a lesser extent dATP; has very weak activity on adenosine and deoxyadenosine and no activity on (d)ADP or (d)AMP. The polypeptide is Nucleotide-binding leucine-rich repeat (NLR)-like protein (Hyaloscypha variabilis (strain UAMH 11265 / GT02V1 / F) (Meliniomyces variabilis)).